The primary structure comprises 316 residues: MKPEIQSSLEYYSDLIEHMDDSHIYSLIFQANSIREKYKGKKIELCAIVNAKSGLCSEDCAFCAQSSRYKTNSPVYSLLEKDEIVKKALEAKKYGVKRFSIVISGKKPSKKELEKIGNSIEAIKKIGIYPCASLGLLEYDEICYLRDKGLERLHCNIETSERFFSNICTTHKFSDKVKTLENANKTGLSICSGGVFGIGESWDDRKEMAEFLKNLNVDSIPINFLTPIKGTPLESKKPLNPMEALRIIILFRLILPDKDIRVCGGRPLLGEFASWIFIAGANALMTGNYLTTTGRHYSDDIKFIEAHGLEVDSVVS.

Residues 38–266 (YKGKKIELCA…DKDIRVCGGR (229 aa)) enclose the Radical SAM core domain. Residues cysteine 56, cysteine 60, and cysteine 63 each contribute to the [4Fe-4S] cluster site. The [2Fe-2S] cluster site is built by serine 100, cysteine 131, cysteine 191, and arginine 261.

The protein belongs to the radical SAM superfamily. Biotin synthase family. As to quaternary structure, homodimer. Requires [4Fe-4S] cluster as cofactor. [2Fe-2S] cluster is required as a cofactor.

The catalysed reaction is (4R,5S)-dethiobiotin + (sulfur carrier)-SH + 2 reduced [2Fe-2S]-[ferredoxin] + 2 S-adenosyl-L-methionine = (sulfur carrier)-H + biotin + 2 5'-deoxyadenosine + 2 L-methionine + 2 oxidized [2Fe-2S]-[ferredoxin]. It participates in cofactor biosynthesis; biotin biosynthesis; biotin from 7,8-diaminononanoate: step 2/2. Its function is as follows. Catalyzes the conversion of dethiobiotin (DTB) to biotin by the insertion of a sulfur atom into dethiobiotin via a radical-based mechanism. In Thermodesulfovibrio yellowstonii (strain ATCC 51303 / DSM 11347 / YP87), this protein is Biotin synthase.